We begin with the raw amino-acid sequence, 300 residues long: MENTKTNASSSGMSSSSSFSVSYAEEMLLADEVSKTNSMSILGPNQLKLCTQLVLSNGAAPVVLSLVSKEKKSILNRMLPKIGQRMYVHHSAIYLLYMPNILKSSSGSITLKLFNEATGELVDVDTDHDATQACIFAGRYPRSILAKDAAKGHDLKLVVHAVASTNMNSAVGVLYPIWEDELSRKQILERGADFLKFPIAKTEPVRDLLNAGKLTDFVLNRTRLGVGSKSDPSPVLLEPRAKIAGKAKTLFIPEGPSVPSTTINGMAPTVRIDAGSPKGLGVPKGFTYESFIKDEILPDH.

It belongs to the alfamovirus movement protein family.

It localises to the host cell junction. The protein resides in the host plasmodesma. Functionally, transports viral genome to neighboring plant cells directly through plasmosdesmata, without any budding. The movement protein allows efficient cell to cell propagation, by bypassing the host cell wall barrier. Acts by forming a tubular structure at the host plasmodesmata, enlarging it enough to allow free passage of virion capsids. This Alfalfa mosaic virus (strain 425 / isolate Leiden) protein is Movement protein.